The sequence spans 102 residues: Putative pterin-4-alpha-carbinolamine dehydratase (102 aa).

It belongs to the pterin-4-alpha-carbinolamine dehydratase family.

It carries out the reaction (4aS,6R)-4a-hydroxy-L-erythro-5,6,7,8-tetrahydrobiopterin = (6R)-L-erythro-6,7-dihydrobiopterin + H2O. In Burkholderia cenocepacia (strain ATCC BAA-245 / DSM 16553 / LMG 16656 / NCTC 13227 / J2315 / CF5610) (Burkholderia cepacia (strain J2315)), this protein is Putative pterin-4-alpha-carbinolamine dehydratase.